Here is a 23-residue protein sequence, read N- to C-terminus: RLKVIPEKLKDVKLVCTDVFGDN.

It belongs to the PNP/UDP phosphorylase family. As to quaternary structure, homotetramer.

It carries out the reaction uridine + phosphate = alpha-D-ribose 1-phosphate + uracil. Its pathway is pyrimidine metabolism; UMP biosynthesis via salvage pathway; uracil from uridine (phosphorylase route): step 1/1. In terms of biological role, the enzymes which catalyze the reversible phosphorolysis of pyrimidine nucleosides are involved in the degradation of these compounds and in their utilization as carbon and energy sources, or in the rescue of pyrimidine bases for nucleotide synthesis. The sequence is that of Uridine phosphorylase (udp) from Lacticaseibacillus rhamnosus (Lactobacillus rhamnosus).